The sequence spans 549 residues: MKRVLTALAAALPFAAHAADAISGAVERQPTNWQAIIMFLIFVVFTLGITYWASKRVRSRSDYYTAGGNITGFQNGLAIAGDYMSAASFLGISALVFTSGYDGLIYSLGFLVGWPIILFLIAERLRNLGRYTFADVASYRLKQGPIRILSACGSLVVVALYLIAQMVGAGKLIELLFGLNYHIAVVLVGVLMMMYVLFGGMLATTWVQIIKAVLLLFGASFMAFMVMKHVGFSFNNLFTEAMAVHPKGTAIMSPGGLVQDPISALSLGLGLMFGTAGLPHILMRFFTVSDAREARKSVFYATGFMGYFYILTFIIGFGAIMLVGTNPAYKDAAGALIGGNNMAAVHLANAVGGNLFLGFISAVAFATILAVVAGLTLAGASAVSHDLYANVFRKGATEREELKVSKITVLVLGVIAIILGVLFENQNIAFMVGLAFAIAASCNFPIILLSMYWSKLTTRGAMLGGWLGLLTAVVLMILGPTIWVQILGHEKAIFPYEYPALFSISVAFLGIWFFSATDNSAEGNREREQFRAQFIRSQTGFGVEQGRAH.

The next 13 helical transmembrane spans lie at 33–53 (WQAI…TYWA), 77–97 (LAIA…ALVF), 103–123 (GLIY…LIAE), 148–168 (ILSA…QMVG), 183–203 (IAVV…GMLA), 206–226 (WVQI…AFMV), 262–282 (ISAL…PHIL), 303–323 (GFMG…IMLV), 355–375 (LFLG…VAGL), 404–424 (VSKI…VLFE), 428–448 (IAFM…PIIL), 464–484 (GGWL…TIWV), and 493–513 (IFPY…GIWF).

It belongs to the sodium:solute symporter (SSF) (TC 2.A.21) family.

It localises to the cell inner membrane. Transports acetate. The sequence is that of Cation/acetate symporter ActP from Salmonella gallinarum (strain 287/91 / NCTC 13346).